The sequence spans 139 residues: uncharacterized protein (139 aa).

The chain crosses the membrane as a helical span at residues 22–38 (SVMSVCFMTMSATVLPI).

Its subcellular location is the membrane. This is an uncharacterized protein from Saccharomyces cerevisiae (strain ATCC 204508 / S288c) (Baker's yeast).